Consider the following 729-residue polypeptide: E3 ubiquitin-protein ligase SH3RF2 (729 aa).

The RING-type zinc finger occupies Cys-12–Arg-53. A disordered region spans residues Ser-78–Asn-105. SH3 domains lie at Asp-125–Gln-184 and Gln-187–Thr-252. The interval Glu-258–Gly-297 is disordered. The segment covering Arg-263–Leu-285 has biased composition (polar residues). An interaction with PAK4 region spans residues Val-370–Thr-459. The SH3 3 domain occupies Leu-380 to Arg-441. Disordered stretches follow at residues Ser-497–Leu-526 and Lys-610–Glu-677. Polar residues predominate over residues Arg-517 to Leu-526. The interaction with PPP1CA stretch occupies residues Lys-641–Gln-646. Phosphoserine is present on Ser-649.

This sequence belongs to the SH3RF family. Interacts with FASLG and PPP1CA. Interacts with PAK4 and TNFRSF1A. Interacts with DLK1, MAP3K10/MLK2, MAPK8IP1/JIP1, MAPK8IP2/JIP2 and MAPK8IP3/JIP3. Interacts with RAC1 (both active GTP- or inactive GDP-bound forms). In terms of processing, autoubiquitinated. In terms of tissue distribution, heart (at protein level). Up-regulated in colon cancer tissues as compared to normal colon tissues (at protein level). Testis. In the heart, present in the apex, left atrium, right atrium, left ventricle and right ventricle, but not in the aorta.

Its subcellular location is the nucleus. It catalyses the reaction S-ubiquitinyl-[E2 ubiquitin-conjugating enzyme]-L-cysteine + [acceptor protein]-L-lysine = [E2 ubiquitin-conjugating enzyme]-L-cysteine + N(6)-ubiquitinyl-[acceptor protein]-L-lysine.. The protein operates within protein modification; protein ubiquitination. Functionally, has E3 ubiquitin-protein ligase activity. Acts as an anti-apoptotic regulator of the JNK pathway by ubiquitinating and promoting the degradation of SH3RF1, a scaffold protein that is required for pro-apoptotic JNK activation. Facilitates TNF-alpha-mediated recruitment of adapter proteins TRADD and RIPK1 to TNFRSF1A and regulates PAK4 protein stability via inhibition of its ubiquitin-mediated proteasomal degradation. Inhibits PPP1CA phosphatase activity. In Homo sapiens (Human), this protein is E3 ubiquitin-protein ligase SH3RF2 (SH3RF2).